The primary structure comprises 123 residues: Transmembrane protein 254 (123 aa).

A run of 3 helical transmembrane segments spans residues 15–35, 63–83, and 95–115; these read LFWFTVITVSFGYYTWAVFWP, NGYWLAWLIHVGESLYALVLC, and LLWFLQTFLFGVASLSILIAY.

Its subcellular location is the membrane. The polypeptide is Transmembrane protein 254 (Mus musculus (Mouse)).